We begin with the raw amino-acid sequence, 426 residues long: MSAIIDIHAREILDSRGNPTVEVEVRLESGAFGRAAVPSGASTGAHEAVELRDGDKARYGGKGVLRAVESVNGEIFDTLSGLEATEQVAIDSIMIELDGTPNKNRLGANAILGVSLAVAKAAADELDQPLYRYVGGTNARTLPVPMMNIINGGAHADNPIDIQEFMVMPVGAETCADSIRMGAEIFHALKKKLKDAGHNTAVGDEGGFAPNLKSTDEALGFIMKAVEAAGYRPGEDVLLALDAASTEFYRNGRYELAGEGKSLDAAGMVAYWQDLVGRYPIVSVEDGMAEDDWDGWKALTDAIGGSVQLVGDDLFVTNPTRLSEGISRGIANSILVKVNQIGSLTETLEAVRIAQSNGYTAVMSHRSGETEDSTIADLAVATNCGQIKTGSLSRSDRIAKYNQLIRIEEGLGRARIFPGRAALKRG.

Gln-163 contributes to the (2R)-2-phosphoglycerate binding site. The active-site Proton donor is Glu-205. Residues Asp-242, Glu-285, and Asp-312 each contribute to the Mg(2+) site. (2R)-2-phosphoglycerate is bound by residues Lys-337, Arg-366, Ser-367, and Lys-388. Residue Lys-337 is the Proton acceptor of the active site.

The protein belongs to the enolase family. Requires Mg(2+) as cofactor.

The protein localises to the cytoplasm. It localises to the secreted. It is found in the cell surface. The catalysed reaction is (2R)-2-phosphoglycerate = phosphoenolpyruvate + H2O. The protein operates within carbohydrate degradation; glycolysis; pyruvate from D-glyceraldehyde 3-phosphate: step 4/5. Functionally, catalyzes the reversible conversion of 2-phosphoglycerate (2-PG) into phosphoenolpyruvate (PEP). It is essential for the degradation of carbohydrates via glycolysis. The chain is Enolase from Rhodospirillum centenum (strain ATCC 51521 / SW).